Reading from the N-terminus, the 151-residue chain is Transcriptional repressor NrdR (151 aa).

The segment at 3 to 34 (CPYCGYIEDRVIDSRPTDEGSAIRRRRECSKC) is a zinc-finger region. An ATP-cone domain is found at 49 to 139 (IMVIKKDKSR…VYRQFKDINT (91 aa)).

Belongs to the NrdR family. Zn(2+) serves as cofactor.

In terms of biological role, negatively regulates transcription of bacterial ribonucleotide reductase nrd genes and operons by binding to NrdR-boxes. The protein is Transcriptional repressor NrdR of Acetivibrio thermocellus (strain ATCC 27405 / DSM 1237 / JCM 9322 / NBRC 103400 / NCIMB 10682 / NRRL B-4536 / VPI 7372) (Clostridium thermocellum).